The sequence spans 383 residues: tRNA-specific 2-thiouridylase MnmA (383 aa).

ATP contacts are provided by residues 9-16 (GMSGGVDS) and M35. The interval 95–97 (NPD) is interaction with target base in tRNA. Catalysis depends on C100, which acts as the Nucleophile. The cysteines at positions 100 and 196 are disulfide-linked. Residue G124 participates in ATP binding. The tract at residues 146-148 (KDQ) is interaction with tRNA. C196 functions as the Cysteine persulfide intermediate in the catalytic mechanism. The interaction with tRNA stretch occupies residues 308–309 (RY).

This sequence belongs to the MnmA/TRMU family.

Its subcellular location is the cytoplasm. It carries out the reaction S-sulfanyl-L-cysteinyl-[protein] + uridine(34) in tRNA + AH2 + ATP = 2-thiouridine(34) in tRNA + L-cysteinyl-[protein] + A + AMP + diphosphate + H(+). In terms of biological role, catalyzes the 2-thiolation of uridine at the wobble position (U34) of tRNA, leading to the formation of s(2)U34. This is tRNA-specific 2-thiouridylase MnmA from Burkholderia pseudomallei (strain 1106a).